Consider the following 500-residue polypeptide: Arabinofuranosidase/B-xylosidase (500 aa).

An N-terminal signal peptide occupies residues 1 to 21 (MLSNARIIAAGCIAAGSLVAA). The N-linked (GlcNAc...) asparagine glycan is linked to Asn-467.

This sequence belongs to the glycosyl hydrolase 54 family.

It carries out the reaction Hydrolysis of terminal non-reducing alpha-L-arabinofuranoside residues in alpha-L-arabinosides.. The catalysed reaction is Hydrolysis of (1-&gt;4)-beta-D-xylans, to remove successive D-xylose residues from the non-reducing termini.. In Trichoderma koningii (Hypocrea koningii), this protein is Arabinofuranosidase/B-xylosidase (xyl1).